The primary structure comprises 269 residues: uncharacterized protein (269 aa).

This is an uncharacterized protein from Escherichia coli (strain K12).